We begin with the raw amino-acid sequence, 180 residues long: NADH-quinone oxidoreductase subunit I (180 aa).

4Fe-4S ferredoxin-type domains lie at 48-80 (IVLT…LQKA) and 90-119 (EFFR…LTPD). Residues C60, C63, C66, C70, C99, C102, C105, and C109 each contribute to the [4Fe-4S] cluster site.

Belongs to the complex I 23 kDa subunit family. As to quaternary structure, NDH-1 is composed of 13 different subunits. Subunits NuoA, H, J, K, L, M, N constitute the membrane sector of the complex. The cofactor is [4Fe-4S] cluster.

The protein localises to the cell inner membrane. The enzyme catalyses a quinone + NADH + 5 H(+)(in) = a quinol + NAD(+) + 4 H(+)(out). In terms of biological role, NDH-1 shuttles electrons from NADH, via FMN and iron-sulfur (Fe-S) centers, to quinones in the respiratory chain. The immediate electron acceptor for the enzyme in this species is believed to be ubiquinone. Couples the redox reaction to proton translocation (for every two electrons transferred, four hydrogen ions are translocated across the cytoplasmic membrane), and thus conserves the redox energy in a proton gradient. In Erwinia tasmaniensis (strain DSM 17950 / CFBP 7177 / CIP 109463 / NCPPB 4357 / Et1/99), this protein is NADH-quinone oxidoreductase subunit I.